The primary structure comprises 794 residues: Striatin-3 (794 aa).

At M1 the chain carries N-acetylmethionine. Positions 1–12 (MDELAGGGGGQG) are enriched in gly residues. Residues 1-59 (MDELAGGGGGQGMAVPPRPQQGPGGNLSLPPGANGAPGGGGPPAAETAGPPAGPELSRP) form a disordered region. Residues 70–78 (YIQHEWARF) are caveolin-binding. The stretch at 76–135 (ARFEMERAHWEVERAELQARIAFLQGERKGQENLKKDLVRRIKMLEYALKQERAKYHKLK) forms a coiled coil. At T149 the chain carries Phosphothreonine. Residues 164 to 181 (QNSQLTWKQGRQLLRQYL) form a calmodulin-binding region. S200, S212, S227, S255, and S332 each carry phosphoserine. The tract at residues 309-339 (EDGEGAGEARSSGDGTEWDKDDLSPTAEVWD) is disordered. WD repeat units lie at residues 475-514 (SHFD…PAKK), 528-567 (AHIG…VDPY), 581-620 (AHTD…PCIC), 676-715 (QSSN…MIHS), 718-757 (AHLD…CVQE), and 764-794 (KLDE…KVFV).

This sequence belongs to the WD repeat striatin family. Tetramerizes. Part of the core of STRIPAK complexes composed of PP2A catalytic and scaffolding subunits, the striatins (PP2A regulatory subunits), the striatin-associated proteins MOB4, STRIP1 and STRIP2, PDCD10 and members of the STE20 kinases, such as STK24 and STK26. The STRIPAK complex can be extended by adapter proteins such as SLMAP:SIKE1 or CTTNBP2NL. Interacts with CDC42BPB.

It localises to the cytoplasm. It is found in the membrane. In terms of biological role, calmodulin-binding scaffolding protein which is the center of the striatin-interacting phosphatase and kinase (STRIPAK) complexes. STRIPAK complexes have critical roles in protein (de)phosphorylation and are regulators of multiple signaling pathways including Hippo, MAPK, nuclear receptor and cytoskeleton remodeling. Different types of STRIPAK complexes are involved in a variety of biological processes such as cell growth, differentiation, apoptosis, metabolism and immune regulation. This chain is Striatin-3 (Strn3), found in Rattus norvegicus (Rat).